A 427-amino-acid polypeptide reads, in one-letter code: Light-independent protochlorophyllide reductase subunit N (427 aa).

3 residues coordinate [4Fe-4S] cluster: cysteine 32, cysteine 57, and cysteine 118.

It belongs to the BchN/ChlN family. In terms of assembly, protochlorophyllide reductase is composed of three subunits; BchL, BchN and BchB. Forms a heterotetramer of two BchB and two BchN subunits. The cofactor is [4Fe-4S] cluster.

The catalysed reaction is chlorophyllide a + oxidized 2[4Fe-4S]-[ferredoxin] + 2 ADP + 2 phosphate = protochlorophyllide a + reduced 2[4Fe-4S]-[ferredoxin] + 2 ATP + 2 H2O. It functions in the pathway porphyrin-containing compound metabolism; bacteriochlorophyll biosynthesis (light-independent). Its function is as follows. Component of the dark-operative protochlorophyllide reductase (DPOR) that uses Mg-ATP and reduced ferredoxin to reduce ring D of protochlorophyllide (Pchlide) to form chlorophyllide a (Chlide). This reaction is light-independent. The NB-protein (BchN-BchB) is the catalytic component of the complex. This is Light-independent protochlorophyllide reductase subunit N from Rubrivivax gelatinosus (strain NBRC 100245 / IL144).